The following is a 261-amino-acid chain: RING finger and CHY zinc finger domain-containing protein 1 (261 aa).

The CHY-type zinc-finger motif lies at 13–80 (QERGQRGCEH…AQQTCEECST (68 aa)). Zn(2+) is bound by residues C20, H22, C33, C34, C40, C43, H44, H50, C62, C65, C75, C78, C87, C90, H101, C102, C105, C108, H118, C119, C122, C125, H134, and C136. The CTCHY-type zinc-finger motif lies at 82–144 (FGEYYCDICH…KCIENVSRQN (63 aa)). An RING-type zinc finger spans residues 145 to 189 (CPICLEDIHTSRVVAHVLPCGHLLHRTCYEEMLKEGYRCPLCMHS). The residue at position 257 (S257) is a Phosphoserine.

In terms of assembly, monomer and homodimer. Interacts with AR, MDM2, KAT5, PLAG1, PLAGL2, COPE, UBE2D2 and GORAB/NTKLBP1. Subject to ubiquitination and proteasomal degradation. Interaction with PLAGL2 or KAT5 enhances protein stability.

It localises to the nucleus. Its subcellular location is the nucleus speckle. The protein localises to the cytoplasm. The catalysed reaction is S-ubiquitinyl-[E2 ubiquitin-conjugating enzyme]-L-cysteine + [acceptor protein]-L-lysine = [E2 ubiquitin-conjugating enzyme]-L-cysteine + N(6)-ubiquitinyl-[acceptor protein]-L-lysine.. It functions in the pathway protein modification; protein ubiquitination. Functionally, E3 ubiquitin-protein ligase that mediates ubiquitination of target proteins, including p53/TP53, TP73, HDAC1 and CDKN1B. Mediates ubiquitination and degradation of p53/TP53; preferentially acts on tetrameric p53/TP53. Catalyzes monoubiquitinates the translesion DNA polymerase POLH. Involved in the ribosome-associated quality control (RQC) pathway, which mediates the extraction of incompletely synthesized nascent chains from stalled ribosomes: RCHY1 acts downstream of NEMF and recognizes CAT tails associated with stalled nascent chains, leading to their ubiquitination and degradation. In terms of biological role, has no E3 ubiquitin-protein ligase activity. The sequence is that of RING finger and CHY zinc finger domain-containing protein 1 (RCHY1) from Homo sapiens (Human).